The chain runs to 330 residues: MKKSFIHQQEEISFVKNTFTQYLIAKLDVVEVQGPILSRVGDGMQDNLSGTENPVSVNVLKIPNATFEVVHSLAKWKRHTLARFGFNEGEGLVVNMKALRPDEDSLDQTHSVYVDQWDWEKVIPDGKRNLAYLKETVETIYKVIRLTELAVEARYDIEAVLPKKITFIHTEELVAEYPDLTPKERENAITKEFGAVFLIGIGGVLPDGKPHDGRAPDYDDWTTETENGYHGLNGDILVWNDQLGSAFELSSMGIRVDEEALKRQVEMTGDQDRLAFDWHKSLLNGLFPLTIGGGIGQSRMVMFLLRKKHIGEVQTSVWPQEVRDSYDNIL.

The protein belongs to the class-II aminoacyl-tRNA synthetase family. AsnA subfamily.

Its subcellular location is the cytoplasm. The enzyme catalyses L-aspartate + NH4(+) + ATP = L-asparagine + AMP + diphosphate + H(+). Its pathway is amino-acid biosynthesis; L-asparagine biosynthesis; L-asparagine from L-aspartate (ammonia route): step 1/1. This is Aspartate--ammonia ligase from Streptococcus pyogenes serotype M5 (strain Manfredo).